The sequence spans 496 residues: Cytosol aminopeptidase (496 aa).

The Mn(2+) site is built by Lys258 and Asp263. Lys270 is an active-site residue. 3 residues coordinate Mn(2+): Asp281, Asp340, and Glu342. Arg344 is a catalytic residue.

The protein belongs to the peptidase M17 family. It depends on Mn(2+) as a cofactor.

The protein localises to the cytoplasm. The enzyme catalyses Release of an N-terminal amino acid, Xaa-|-Yaa-, in which Xaa is preferably Leu, but may be other amino acids including Pro although not Arg or Lys, and Yaa may be Pro. Amino acid amides and methyl esters are also readily hydrolyzed, but rates on arylamides are exceedingly low.. The catalysed reaction is Release of an N-terminal amino acid, preferentially leucine, but not glutamic or aspartic acids.. In terms of biological role, presumably involved in the processing and regular turnover of intracellular proteins. Catalyzes the removal of unsubstituted N-terminal amino acids from various peptides. The polypeptide is Cytosol aminopeptidase (pepA) (Helicobacter pylori (strain J99 / ATCC 700824) (Campylobacter pylori J99)).